Here is a 508-residue protein sequence, read N- to C-terminus: UTP--glucose-1-phosphate uridylyltransferase (508 aa).

Ser-2 carries the post-translational modification N-acetylserine. 2 positions are modified to phosphoserine: Ser-2 and Ser-13. UTP is bound by residues 113 to 116, Lys-127, Gln-190, and Gly-222; that span reads LNGG. 115–116 lines the substrate pocket; it reads GG. Lys-127 is a Mg(2+) binding site. Substrate contacts are provided by residues His-223, 251-253, and Asn-330; that span reads NID. Asp-253 contributes to the UTP binding site. Residue Asp-253 coordinates Mg(2+). Residue Lys-396 coordinates UTP. Residue Lys-396 is part of the active site. Thr-426 carries the phosphothreonine modification. Residue Ser-434 is modified to Phosphoserine. N6-acetyllysine is present on Lys-438. Phosphoserine occurs at positions 448 and 461. Residues 457-508 are oligomerization; the sequence is HLTVSGDVTFGKNVSLKGTVIIIANHGDRIDIPPGAVLENKIVSGNLRILDH. The critical for end-to-end subunit interaction stretch occupies residues 502 to 503; sequence NL.

This sequence belongs to the UDPGP type 1 family. In terms of assembly, homooctamer. In terms of tissue distribution, highly expressed in various brain regions. Expressed in amygdala, anterior cingulate cortex, caudate, cerebellar hemisphere, cerebellum, cortex, frontal cortex, hippocampus, hypothalamus, nucleus accumbens, putamen, spinal cord and substantia nigra. Also widely expressed among other tissues, including liver, heart, placenta, lung, kidney, pancreas and skeletal muscle.

It is found in the cytoplasm. It catalyses the reaction alpha-D-glucose 1-phosphate + UTP + H(+) = UDP-alpha-D-glucose + diphosphate. It functions in the pathway glycan biosynthesis; glycogen biosynthesis. In terms of biological role, UTP--glucose-1-phosphate uridylyltransferase catalyzing the conversion of glucose-1-phosphate into UDP-glucose, a crucial precursor for the production of glycogen. In Homo sapiens (Human), this protein is UTP--glucose-1-phosphate uridylyltransferase.